A 202-amino-acid polypeptide reads, in one-letter code: D-alanyl-D-alanine dipeptidase (202 aa).

Positions 116 and 123 each coordinate Zn(2+). The Proton donor/acceptor role is filled by glutamate 181. Histidine 184 lines the Zn(2+) pocket.

This sequence belongs to the peptidase M15D family. In terms of assembly, homodimer. Zn(2+) serves as cofactor. It depends on Fe(2+) as a cofactor. Co(2+) is required as a cofactor. Requires Ni(2+) as cofactor.

The catalysed reaction is D-alanyl-D-alanine + H2O = 2 D-alanine. Its activity is regulated as follows. Inhibited by aminoalkyl phosphinate analogs. Catalyzes hydrolysis of the D-alanyl-D-alanine dipeptide. The polypeptide is D-alanyl-D-alanine dipeptidase (vanX) (Enterococcus faecium (Streptococcus faecium)).